The sequence spans 71 residues: Omega-conotoxin-like CnVIIE (71 aa).

The N-terminal stretch at 1–22 (MKLTCVVIVAVLLLTACQLITA) is a signal peptide. Positions 23–45 (DDSRGTQKHRALRSDTKLSMSTR) are excised as a propeptide. Disulfide bonds link cysteine 46–cysteine 61, cysteine 53–cysteine 65, and cysteine 60–cysteine 70. Proline 52 carries the 4-hydroxyproline; partial modification. Residue cysteine 70 is modified to Cysteine amide.

This sequence belongs to the conotoxin M superfamily. Expressed by the venom duct.

It localises to the secreted. Its function is as follows. Omega-conotoxins act at presynaptic membranes, they bind and block voltage-gated calcium channels (Cav). This chain is Omega-conotoxin-like CnVIIE, found in Conus consors (Singed cone).